Reading from the N-terminus, the 482-residue chain is MMKVHIITLGCPKNQVDSEGMSGILAAQGHTLAASADDADVVIVNTCSFIAAAREETLAVLRDVAACKTPEQRLVAAGCMAESHRAIVAATPGVDATLGTREWTRIAEVVETFQPAATMAPLNAASAREIIPLTSAGVPSPAPHDLSVPGAYADWRTAPIRRRAVGPSAYLKISDGCNLRCAFCTIPSFKGDMRSKAIGAILGEAQELAAAGVKEIVLVAQHLTDYGRDLGLKDGLAILLDEICAVLPENVWVRLMYAYPHGIGERLIATMARHPQICHYLDMPLQHAHPETLRRMRRPPDTDRTRRLIDDLRAAIPDIAIRSTFIVGFPGETNTEFRALLAFLEDVQFDRVGVFRYSREPGTPAAALPDQLAPRIIERRWHEIMRLQQRISRERNRRWLGRVVRVLVEGQGQTDDGRMLSVGRSFRDAPEVDGQVLFWGAATPGTFVDVRVTQALDYDLWGDVVGVLDGEERIVKCIQSVG.

Residues 2–115 (MKVHIITLGC…IAEVVETFQP (114 aa)) form the MTTase N-terminal domain. Residues Cys-11, Cys-47, Cys-79, Cys-177, Cys-181, and Cys-184 each contribute to the [4Fe-4S] cluster site. The Radical SAM core domain occupies 163–394 (RAVGPSAYLK…MRLQQRISRE (232 aa)). Residues 397 to 466 (RRWLGRVVRV…DYDLWGDVVG (70 aa)) form the TRAM domain.

The protein belongs to the methylthiotransferase family. RimO subfamily. The cofactor is [4Fe-4S] cluster.

Its subcellular location is the cytoplasm. It catalyses the reaction L-aspartate(89)-[ribosomal protein uS12]-hydrogen + (sulfur carrier)-SH + AH2 + 2 S-adenosyl-L-methionine = 3-methylsulfanyl-L-aspartate(89)-[ribosomal protein uS12]-hydrogen + (sulfur carrier)-H + 5'-deoxyadenosine + L-methionine + A + S-adenosyl-L-homocysteine + 2 H(+). Its function is as follows. Catalyzes the methylthiolation of an aspartic acid residue of ribosomal protein uS12. The polypeptide is Ribosomal protein uS12 methylthiotransferase RimO (Roseiflexus castenholzii (strain DSM 13941 / HLO8)).